The chain runs to 186 residues: Imidazoleglycerol-phosphate dehydratase (186 aa).

It belongs to the imidazoleglycerol-phosphate dehydratase family.

The protein resides in the cytoplasm. It carries out the reaction D-erythro-1-(imidazol-4-yl)glycerol 3-phosphate = 3-(imidazol-4-yl)-2-oxopropyl phosphate + H2O. It participates in amino-acid biosynthesis; L-histidine biosynthesis; L-histidine from 5-phospho-alpha-D-ribose 1-diphosphate: step 6/9. This is Imidazoleglycerol-phosphate dehydratase from Dictyoglomus turgidum (strain DSM 6724 / Z-1310).